Consider the following 253-residue polypeptide: Retinoic acid early-inducible protein 1-beta (253 aa).

Positions 1-28 (MAKAAVTKRHHFMIQKLLILLSYGYTNG) are cleaved as a signal peptide. A disulfide bond links cysteine 37 and cysteine 56. N-linked (GlcNAc...) asparagine glycosylation is found at asparagine 38, asparagine 70, asparagine 83, asparagine 143, and asparagine 156. A disulfide bridge connects residues cysteine 90 and cysteine 190. Residues 198 to 230 (LKQSKEKPRSTSRSPSITQLTSTSPLPPPSHST) form a disordered region. The span at 211-221 (SPSITQLTSTS) shows a compositional bias: low complexity. Residue serine 229 is the site of GPI-anchor amidated serine attachment. A propeptide spans 230–253 (TSKKGFISVGLIFISLLFAFAFAM) (removed in mature form).

Belongs to the NKG2D ligand family. Post-translationally, glycosylated. Expressed predominantly in embryonic brain.

Its subcellular location is the cell membrane. Functionally, acts as a ligand for KLRK1. This Mus musculus (Mouse) protein is Retinoic acid early-inducible protein 1-beta (Raet1b).